Reading from the N-terminus, the 353-residue chain is Quinolinate synthase (353 aa).

Residues H49 and S70 each contribute to the iminosuccinate site. C115 contacts [4Fe-4S] cluster. Residues 141–143 and S158 each bind iminosuccinate; that span reads YAN. C202 contributes to the [4Fe-4S] cluster binding site. Residues 228–230 and T245 contribute to the iminosuccinate site; that span reads HPE. [4Fe-4S] cluster is bound at residue C299.

Belongs to the quinolinate synthase family. Type 1 subfamily. [4Fe-4S] cluster serves as cofactor.

The protein resides in the cytoplasm. The catalysed reaction is iminosuccinate + dihydroxyacetone phosphate = quinolinate + phosphate + 2 H2O + H(+). The protein operates within cofactor biosynthesis; NAD(+) biosynthesis; quinolinate from iminoaspartate: step 1/1. Functionally, catalyzes the condensation of iminoaspartate with dihydroxyacetone phosphate to form quinolinate. The chain is Quinolinate synthase from Marinobacter nauticus (strain ATCC 700491 / DSM 11845 / VT8) (Marinobacter aquaeolei).